Reading from the N-terminus, the 371-residue chain is tRNA-specific 2-thiouridylase MnmA (371 aa).

Residues 14–21 (GMSGGVDS) and Met40 contribute to the ATP site. Positions 100 to 102 (NPD) are interaction with target base in tRNA. The active-site Nucleophile is the Cys105. Cysteines 105 and 205 form a disulfide. Position 129 (Gly129) interacts with ATP. The tract at residues 155–157 (KDQ) is interaction with tRNA. Cys205 serves as the catalytic Cysteine persulfide intermediate. The interval 321-322 (RY) is interaction with tRNA.

Belongs to the MnmA/TRMU family.

The protein localises to the cytoplasm. The catalysed reaction is S-sulfanyl-L-cysteinyl-[protein] + uridine(34) in tRNA + AH2 + ATP = 2-thiouridine(34) in tRNA + L-cysteinyl-[protein] + A + AMP + diphosphate + H(+). Catalyzes the 2-thiolation of uridine at the wobble position (U34) of tRNA, leading to the formation of s(2)U34. The polypeptide is tRNA-specific 2-thiouridylase MnmA (Bordetella parapertussis (strain 12822 / ATCC BAA-587 / NCTC 13253)).